A 76-amino-acid polypeptide reads, in one-letter code: DNA-directed RNA polymerase subunit Rpo10 (76 aa).

Positions 16, 19, 53, and 54 each coordinate Zn(2+).

It belongs to the archaeal Rpo10/eukaryotic RPB10 RNA polymerase subunit family. As to quaternary structure, part of the RNA polymerase complex. It depends on Zn(2+) as a cofactor.

The protein resides in the cytoplasm. It carries out the reaction RNA(n) + a ribonucleoside 5'-triphosphate = RNA(n+1) + diphosphate. Its function is as follows. DNA-dependent RNA polymerase (RNAP) catalyzes the transcription of DNA into RNA using the four ribonucleoside triphosphates as substrates. The chain is DNA-directed RNA polymerase subunit Rpo10 from Archaeoglobus fulgidus (strain ATCC 49558 / DSM 4304 / JCM 9628 / NBRC 100126 / VC-16).